A 263-amino-acid chain; its full sequence is tRNA uridine(34) hydroxylase (263 aa).

Positions 129–223 (EGREVVTLDT…YFEETDGAFY (95 aa)) constitute a Rhodanese domain. Cys183 (cysteine persulfide intermediate) is an active-site residue.

Belongs to the TrhO family.

It carries out the reaction uridine(34) in tRNA + AH2 + O2 = 5-hydroxyuridine(34) in tRNA + A + H2O. Functionally, catalyzes oxygen-dependent 5-hydroxyuridine (ho5U) modification at position 34 in tRNAs. The chain is tRNA uridine(34) hydroxylase from Delftia acidovorans (strain DSM 14801 / SPH-1).